Here is a 446-residue protein sequence, read N- to C-terminus: Xylose isomerase 2 (446 aa).

Catalysis depends on residues H109 and D112. The Mg(2+) site is built by E240, E276, H279, D304, D315, D317, and D347.

It belongs to the xylose isomerase family. In terms of assembly, homotetramer. Mg(2+) serves as cofactor.

It localises to the cytoplasm. The catalysed reaction is alpha-D-xylose = alpha-D-xylulofuranose. This Xanthomonas campestris pv. campestris (strain 8004) protein is Xylose isomerase 2.